A 1118-amino-acid chain; its full sequence is DNA mismatch repair protein MSH1, mitochondrial (1118 aa).

768–775 provides a ligand contact to ATP; that stretch reads GPNGGGKS.

Belongs to the DNA mismatch repair MutS family.

It localises to the mitochondrion. It is found in the plastid. The protein localises to the chloroplast. In terms of biological role, DNA mismatch repair protein specifically involved in maintenance of mitochondrial genome configuration by controlling specific rearranged portion. Functions by suppressing asymmetric recombination at some repeat pairs. The polypeptide is DNA mismatch repair protein MSH1, mitochondrial (MSH1) (Arabidopsis thaliana (Mouse-ear cress)).